Reading from the N-terminus, the 196-residue chain is Probable malonic semialdehyde reductase RutE (196 aa).

Belongs to the nitroreductase family. HadB/RutE subfamily. Requires FMN as cofactor.

It catalyses the reaction 3-hydroxypropanoate + NADP(+) = 3-oxopropanoate + NADPH + H(+). In terms of biological role, may reduce toxic product malonic semialdehyde to 3-hydroxypropionic acid, which is excreted. The protein is Probable malonic semialdehyde reductase RutE of Escherichia coli O8 (strain IAI1).